We begin with the raw amino-acid sequence, 385 residues long: 1-deoxy-D-xylulose 5-phosphate reductoisomerase (385 aa).

The NADPH site is built by threonine 13, glycine 14, serine 15, isoleucine 16, asparagine 40, and asparagine 122. Lysine 123 contacts 1-deoxy-D-xylulose 5-phosphate. Residue glutamate 124 coordinates NADPH. A Mn(2+)-binding site is contributed by aspartate 148. Residues serine 149, glutamate 150, serine 177, and histidine 200 each coordinate 1-deoxy-D-xylulose 5-phosphate. Residue glutamate 150 coordinates Mn(2+). Glycine 206 provides a ligand contact to NADPH. Residues serine 213, asparagine 218, lysine 219, and glutamate 222 each contribute to the 1-deoxy-D-xylulose 5-phosphate site. Glutamate 222 serves as a coordination point for Mn(2+).

It belongs to the DXR family. Mg(2+) is required as a cofactor. Requires Mn(2+) as cofactor.

It carries out the reaction 2-C-methyl-D-erythritol 4-phosphate + NADP(+) = 1-deoxy-D-xylulose 5-phosphate + NADPH + H(+). The protein operates within isoprenoid biosynthesis; isopentenyl diphosphate biosynthesis via DXP pathway; isopentenyl diphosphate from 1-deoxy-D-xylulose 5-phosphate: step 1/6. Its function is as follows. Catalyzes the NADPH-dependent rearrangement and reduction of 1-deoxy-D-xylulose-5-phosphate (DXP) to 2-C-methyl-D-erythritol 4-phosphate (MEP). In Francisella tularensis subsp. holarctica (strain FTNF002-00 / FTA), this protein is 1-deoxy-D-xylulose 5-phosphate reductoisomerase.